The chain runs to 496 residues: Lysine--tRNA ligase (496 aa).

Mg(2+) is bound by residues E409 and E416.

It belongs to the class-II aminoacyl-tRNA synthetase family. As to quaternary structure, homodimer. Requires Mg(2+) as cofactor.

Its subcellular location is the cytoplasm. The catalysed reaction is tRNA(Lys) + L-lysine + ATP = L-lysyl-tRNA(Lys) + AMP + diphosphate. This Streptococcus pneumoniae (strain Hungary19A-6) protein is Lysine--tRNA ligase.